We begin with the raw amino-acid sequence, 1194 residues long: Chitin synthase C (1194 aa).

Disordered stretches follow at residues methionine 1–leucine 91 and glycine 136–alanine 177. The span at proline 12–proline 23 shows a compositional bias: basic and acidic residues. Basic residues predominate over residues proline 42 to arginine 54. Basic and acidic residues-rich tracts occupy residues histidine 55–isoleucine 69 and valine 76–proline 85. The span at threonine 150 to serine 164 shows a compositional bias: basic residues. The chain crosses the membrane as a helical span at residues isoleucine 221 to phenylalanine 241. Residues asparagine 351 and asparagine 390 are each glycosylated (N-linked (GlcNAc...) asparagine). Residues tyrosine 476 to phenylalanine 496 form a helical membrane-spanning segment. N-linked (GlcNAc...) asparagine glycosylation is found at asparagine 582, asparagine 608, asparagine 885, and asparagine 1014. The next 3 membrane-spanning stretches (helical) occupy residues phenylalanine 1039–isoleucine 1059, isoleucine 1073–threonine 1093, and leucine 1097–leucine 1117.

This sequence belongs to the chitin synthase family. Class V subfamily.

The protein localises to the cell membrane. It carries out the reaction [(1-&gt;4)-N-acetyl-beta-D-glucosaminyl](n) + UDP-N-acetyl-alpha-D-glucosamine = [(1-&gt;4)-N-acetyl-beta-D-glucosaminyl](n+1) + UDP + H(+). In terms of biological role, polymerizes chitin, a structural polymer of the cell wall and septum, by transferring the sugar moiety of UDP-GlcNAc to the non-reducing end of the growing chitin polymer. Responsible for synthesis of 30-40% of the chitin in the cells. ChsA and chsD play redundant functions in conidia formation. The chitin synthesized by the chsD-encoded isozyme contributes to the rigidity of the walls of germinating conidia, of the subapical region of hyphae, and of conidiophore vesicles, but is not necessary for normal morphology of these cells. In Emericella nidulans (strain FGSC A4 / ATCC 38163 / CBS 112.46 / NRRL 194 / M139) (Aspergillus nidulans), this protein is Chitin synthase C.